A 610-amino-acid polypeptide reads, in one-letter code: ATP-dependent RNA helicase HAS1 (610 aa).

Disordered stretches follow at residues 1–81 (MTAA…AELK) and 112–131 (ALAV…DDPT). Basic residues predominate over residues 9–18 (KKRKRKHKAK). Acidic residues predominate over residues 51-76 (PEVEDVVADASENDVESGAEEDEEQV). The Q motif signature appears at 131–159 (TRFDELNLSERTMEAIKTMGFESMTEIQR). In terms of domain architecture, Helicase ATP-binding spans 162–337 (IPPLLSGKDV…RISLKAGPLY (176 aa)). Residue 175–182 (AKTGSGKT) coordinates ATP. The DEAD box signature appears at 285-288 (DEAD). Residues 351 to 521 (GLEQGYVICD…NIQSQLEALI (171 aa)) enclose the Helicase C-terminal domain. Residues 584–594 (DKKVEGRREYG) are compositionally biased toward basic and acidic residues. The interval 584-610 (DKKVEGRREYGRQPQQGRRPMKPNKRF) is disordered.

The protein belongs to the DEAD box helicase family. DDX18/HAS1 subfamily. Associates in the nucleolus with the 60S and pre-60S ribosomal subunits.

Its subcellular location is the nucleus. It localises to the nucleolus. It catalyses the reaction ATP + H2O = ADP + phosphate + H(+). Its function is as follows. ATP-dependent RNA helicase involved in 40S ribosomal subunit biogenesis. Required for the processing and cleavage of 35S pre-rRNA at sites A0, A1, and A2, leading to mature 18S rRNA. This Phaeosphaeria nodorum (strain SN15 / ATCC MYA-4574 / FGSC 10173) (Glume blotch fungus) protein is ATP-dependent RNA helicase HAS1 (HAS1).